The chain runs to 503 residues: 2-phosphoxylose phosphatase 1 (503 aa).

At 1–6 (MLARSR) the chain is on the cytoplasmic side. Residues 7–27 (FILVLVVGALLAVLSFSLQYL) traverse the membrane as a helical; Signal-anchor for type II membrane protein segment. The Lumenal portion of the chain corresponds to 28–503 (HLIPTNPVAE…YQQACHQTVL (476 aa)). Positions 38–63 (QRSAGRSRKRVNPVLHTDPPAPDPIR) are disordered. Residue Asn73 is glycosylated (N-linked (GlcNAc...) asparagine). His98 (nucleophile) is an active-site residue. Asn365 is a glycosylation site (N-linked (GlcNAc...) asparagine). Catalysis depends on Asp396, which acts as the Proton donor. Asn490 carries an N-linked (GlcNAc...) asparagine glycan.

The protein belongs to the histidine acid phosphatase family.

The protein localises to the golgi apparatus membrane. The enzyme catalyses 3-O-[beta-D-GlcA-(1-&gt;3)-beta-D-Gal-(1-&gt;3)-beta-D-Gal-(1-&gt;4)-beta-D-2-O-P-Xyl]-L-seryl-[protein] + H2O = 3-O-(beta-D-GlcA-(1-&gt;3)-beta-D-Gal-(1-&gt;3)-beta-D-Gal-(1-&gt;4)-beta-D-Xyl)-L-seryl-[protein] + phosphate. In terms of biological role, responsible for the 2-O-dephosphorylation of xylose in the glycosaminoglycan-protein linkage region of proteoglycans thereby regulating the amount of mature glycosaminoglycan (GAG) chains. Sulfated glycosaminoglycans (GAGs), including heparan sulfate and chondroitin sulfate, are synthesized on the so-called common GAG-protein linkage region (GlcUAbeta1-3Galbeta1-3Galbeta1-4Xylbeta1-O-Ser) of core proteins, which is formed by the stepwise addition of monosaccharide residues by the respective specific glycosyltransferases. The polypeptide is 2-phosphoxylose phosphatase 1 (Danio rerio (Zebrafish)).